Here is a 445-residue protein sequence, read N- to C-terminus: Ribosomal protein uS12 methylthiotransferase RimO (445 aa).

Positions Y4–N119 constitute an MTTase N-terminal domain. [4Fe-4S] cluster contacts are provided by C13, C48, C82, C157, C161, and C164. The region spanning T143–E373 is the Radical SAM core domain. The TRAM domain maps to K376–N441.

It belongs to the methylthiotransferase family. RimO subfamily. [4Fe-4S] cluster is required as a cofactor.

The protein resides in the cytoplasm. The enzyme catalyses L-aspartate(89)-[ribosomal protein uS12]-hydrogen + (sulfur carrier)-SH + AH2 + 2 S-adenosyl-L-methionine = 3-methylsulfanyl-L-aspartate(89)-[ribosomal protein uS12]-hydrogen + (sulfur carrier)-H + 5'-deoxyadenosine + L-methionine + A + S-adenosyl-L-homocysteine + 2 H(+). In terms of biological role, catalyzes the methylthiolation of an aspartic acid residue of ribosomal protein uS12. This is Ribosomal protein uS12 methylthiotransferase RimO from Clostridium perfringens (strain 13 / Type A).